A 643-amino-acid chain; its full sequence is Alpha-dioxygenase PIOX (643 aa).

The active-site Proton acceptor is His168. Asp169 provides a ligand contact to Ca(2+). His173 provides a ligand contact to heme b. Residues Thr221, Trp223, Asp225, and Ser227 each contribute to the Ca(2+) site. His393, Arg490, and Arg494 together coordinate heme b.

It belongs to the peroxidase family. Requires heme b as cofactor. The cofactor is Ca(2+).

The enzyme catalyses hexadecanoate + O2 = (2R)-2-hydroperoxyhexadecanoate. It catalyses the reaction dodecanoate + O2 = (2R)-2-hydroperoxydodecanoate. Functionally, alpha-dioxygenase that catalyzes the primary oxygenation step of a variety of 14-20 carbon fatty acids, containing up to three unsaturated bonds, into their corresponding 2R-hydroperoxides. Involved in the production of oxylipins that function in cell signaling, wound healing, and protection from infection. The alpha-oxidation pathway of fatty acids may play a role during plant developmental processes. This is Alpha-dioxygenase PIOX from Pisum sativum (Garden pea).